We begin with the raw amino-acid sequence, 387 residues long: Phosphoglycerate kinase (387 aa).

Substrate is bound by residues Asp21–Asn23, Arg36, and His59–Arg62. N6-acetyllysine is present on Lys84. 2 residues coordinate substrate: Arg113 and Arg146. ATP-binding positions include Lys197, Glu314, and Gly340–Thr343.

Belongs to the phosphoglycerate kinase family. As to quaternary structure, monomer.

It localises to the cytoplasm. It carries out the reaction (2R)-3-phosphoglycerate + ATP = (2R)-3-phospho-glyceroyl phosphate + ADP. The protein operates within carbohydrate degradation; glycolysis; pyruvate from D-glyceraldehyde 3-phosphate: step 2/5. This is Phosphoglycerate kinase (pgk) from Escherichia coli O157:H7.